Here is a 142-residue protein sequence, read N- to C-terminus: Large ribosomal subunit protein uL13 (142 aa).

Belongs to the universal ribosomal protein uL13 family. In terms of assembly, part of the 50S ribosomal subunit.

Functionally, this protein is one of the early assembly proteins of the 50S ribosomal subunit, although it is not seen to bind rRNA by itself. It is important during the early stages of 50S assembly. The protein is Large ribosomal subunit protein uL13 of Nitrosococcus oceani (strain ATCC 19707 / BCRC 17464 / JCM 30415 / NCIMB 11848 / C-107).